The following is a 96-amino-acid chain: MSKIRPLGDRVVVKRSEDETKTPCGIVIPDSAAEKQDQGTVVALGPGKKDSEGARVPMEVRLGDRVLFGKYAGQSIKVDDEDLMVMREEDIVAVIE.

Belongs to the GroES chaperonin family. In terms of assembly, heptamer of 7 subunits arranged in a ring. Interacts with the chaperonin GroEL.

The protein resides in the cytoplasm. Functionally, together with the chaperonin GroEL, plays an essential role in assisting protein folding. The GroEL-GroES system forms a nano-cage that allows encapsulation of the non-native substrate proteins and provides a physical environment optimized to promote and accelerate protein folding. GroES binds to the apical surface of the GroEL ring, thereby capping the opening of the GroEL channel. The sequence is that of Co-chaperonin GroES from Tremblaya princeps.